A 494-amino-acid chain; its full sequence is Glutamate--tRNA ligase (494 aa).

The 'HIGH' region motif lies at 15-25 (PSPTGNPHVGL). Residues Cys112, Cys114, Cys139, and Glu141 each contribute to the Zn(2+) site. Positions 260-264 (KLSKR) match the 'KMSKS' region motif. Residue Lys263 participates in ATP binding.

The protein belongs to the class-I aminoacyl-tRNA synthetase family. Glutamate--tRNA ligase type 1 subfamily. As to quaternary structure, monomer. Zn(2+) serves as cofactor.

The protein resides in the cytoplasm. It carries out the reaction tRNA(Glu) + L-glutamate + ATP = L-glutamyl-tRNA(Glu) + AMP + diphosphate. Catalyzes the attachment of glutamate to tRNA(Glu) in a two-step reaction: glutamate is first activated by ATP to form Glu-AMP and then transferred to the acceptor end of tRNA(Glu). The polypeptide is Glutamate--tRNA ligase (Streptomyces coelicolor (strain ATCC BAA-471 / A3(2) / M145)).